A 31-amino-acid chain; its full sequence is Cyclotide Hyfl-A (31 aa).

The segment at residues 1-31 (SISCGESCVYIPCTVTALVGCTCKDKVCYLN) is a cross-link (cyclopeptide (Ser-Asn)). Disulfide bonds link cysteine 4–cysteine 21, cysteine 8–cysteine 23, and cysteine 13–cysteine 28.

It belongs to the cyclotide family. Bracelet subfamily. In terms of processing, this is a cyclic peptide.

Functionally, probably participates in a plant defense mechanism. This is Cyclotide Hyfl-A from Hybanthus floribundus (Greenviolet).